A 304-amino-acid chain; its full sequence is Small ribosomal subunit biogenesis GTPase RsgA (304 aa).

The CP-type G domain maps to 78-237 (VSFLTRPPVA…VADTPGFNRP (160 aa)). Residues 127-130 (TKTD) and 179-187 (GPSGVGKSS) contribute to the GTP site. 4 residues coordinate Zn(2+): C262, C267, H269, and C275.

The protein belongs to the TRAFAC class YlqF/YawG GTPase family. RsgA subfamily. In terms of assembly, monomer. Associates with 30S ribosomal subunit, binds 16S rRNA. It depends on Zn(2+) as a cofactor.

It localises to the cytoplasm. In terms of biological role, one of several proteins that assist in the late maturation steps of the functional core of the 30S ribosomal subunit. Helps release RbfA from mature subunits. May play a role in the assembly of ribosomal proteins into the subunit. Circularly permuted GTPase that catalyzes slow GTP hydrolysis, GTPase activity is stimulated by the 30S ribosomal subunit. This chain is Small ribosomal subunit biogenesis GTPase RsgA, found in Synechococcus sp. (strain CC9311).